Here is a 696-residue protein sequence, read N- to C-terminus: MAQAGPTPQQAIARLRAEIEQHNIRYYVHDDPSVPDAEYDALMRDLQALEAEHPELVTPDSPTQRVGAAPLAEFGSVRHAVPMLSLGNAFDEEDVRAFDKRVADTLRGAGLLGLDQQVEYFCELKLDGLAISLCYEEGRLAQAATRGDGQTGEDVTANIRTIKGVPLRLHGAPRVLEVRGEVLMNRAEFERLNRTQAARGEKVFVNPRNAAAGSLRQLDPRITAQRPLRFFAYSWGEVHGLPEGMPTRFDEPAPGVRVASTLPRDTHGGMLDWLAELGLPVNLRHNHRERGADGLLAFYERIGKLRADLPYDIDGVVYKVDALPSQRVLGFVARAPRFALAHKFPAEEAVTQLLGIEVQVGRTGAITPVARLAPVFVGGVTVTNATLHNEDEIRRKDVRIGDTVIVRRAGDVIPEVVGPVLEKRPADAREFVMLTACPICGSAIERPEGEAIARCTGGLFCAAQRKQTLLHAAGRKALDIEGLGEKLIDQLVDADRVKSLADIYSLTAFELAALERMGKKSAENLVAAIDQARRPALGRLLFALGIRHVGETTARDVARHFGSMERIMDASEEALLAVPDVGGVVAGSIRRFFAEPHNREIVEQLTQQGVHPQAEAEPEGTSLAGKTFVLTGTMPNWTRDEATRRILAAGGKVSGSVSKKTAYLVTGEDAGSKLTKAQELGVPVLDEDGLKALLGL.

NAD(+) is bound by residues 36–40, 85–86, and Glu-123; these read DAEYD and SL. Lys-125 acts as the N6-AMP-lysine intermediate in catalysis. Residues Arg-146, Glu-181, Lys-319, and Lys-343 each coordinate NAD(+). Zn(2+) contacts are provided by Cys-437, Cys-440, Cys-455, and Cys-461. A BRCT domain is found at 618 to 696; that stretch reads PEGTSLAGKT…EDGLKALLGL (79 aa).

The protein belongs to the NAD-dependent DNA ligase family. LigA subfamily. The cofactor is Mg(2+). Mn(2+) serves as cofactor.

It catalyses the reaction NAD(+) + (deoxyribonucleotide)n-3'-hydroxyl + 5'-phospho-(deoxyribonucleotide)m = (deoxyribonucleotide)n+m + AMP + beta-nicotinamide D-nucleotide.. In terms of biological role, DNA ligase that catalyzes the formation of phosphodiester linkages between 5'-phosphoryl and 3'-hydroxyl groups in double-stranded DNA using NAD as a coenzyme and as the energy source for the reaction. It is essential for DNA replication and repair of damaged DNA. This chain is DNA ligase, found in Bordetella parapertussis (strain 12822 / ATCC BAA-587 / NCTC 13253).